A 345-amino-acid polypeptide reads, in one-letter code: Methionine import ATP-binding protein MetN 2 (345 aa).

One can recognise an ABC transporter domain in the interval 4–243 (IELRHVKKEF…PQTEIAKRFI (240 aa)). Position 40 to 47 (40 to 47 (GYSGAGKS)) interacts with ATP.

The protein belongs to the ABC transporter superfamily. Methionine importer (TC 3.A.1.24) family. In terms of assembly, the complex is composed of two ATP-binding proteins (MetN), two transmembrane proteins (MetI) and a solute-binding protein (MetQ).

It is found in the cell membrane. It catalyses the reaction L-methionine(out) + ATP + H2O = L-methionine(in) + ADP + phosphate + H(+). The catalysed reaction is D-methionine(out) + ATP + H2O = D-methionine(in) + ADP + phosphate + H(+). Its function is as follows. Part of the ABC transporter complex MetNIQ involved in methionine import. Responsible for energy coupling to the transport system. The sequence is that of Methionine import ATP-binding protein MetN 2 from Enterococcus faecalis (strain ATCC 700802 / V583).